The primary structure comprises 89 residues: Large ribosomal subunit protein bL27 (89 aa).

Belongs to the bacterial ribosomal protein bL27 family.

The sequence is that of Large ribosomal subunit protein bL27 from Synechococcus sp. (strain JA-3-3Ab) (Cyanobacteria bacterium Yellowstone A-Prime).